The sequence spans 486 residues: Protein nucleotidyltransferase YdiU (486 aa).

8 residues coordinate ATP: Gly-90, Gly-92, Arg-93, Lys-113, Asp-125, Gly-126, Arg-176, and Arg-183. Catalysis depends on Asp-252, which acts as the Proton acceptor. The Mg(2+) site is built by Asn-253 and Asp-262. An ATP-binding site is contributed by Asp-262.

It belongs to the SELO family. The cofactor is Mg(2+). Mn(2+) is required as a cofactor.

It carries out the reaction L-seryl-[protein] + ATP = 3-O-(5'-adenylyl)-L-seryl-[protein] + diphosphate. It catalyses the reaction L-threonyl-[protein] + ATP = 3-O-(5'-adenylyl)-L-threonyl-[protein] + diphosphate. The enzyme catalyses L-tyrosyl-[protein] + ATP = O-(5'-adenylyl)-L-tyrosyl-[protein] + diphosphate. The catalysed reaction is L-histidyl-[protein] + UTP = N(tele)-(5'-uridylyl)-L-histidyl-[protein] + diphosphate. It carries out the reaction L-seryl-[protein] + UTP = O-(5'-uridylyl)-L-seryl-[protein] + diphosphate. It catalyses the reaction L-tyrosyl-[protein] + UTP = O-(5'-uridylyl)-L-tyrosyl-[protein] + diphosphate. In terms of biological role, nucleotidyltransferase involved in the post-translational modification of proteins. It can catalyze the addition of adenosine monophosphate (AMP) or uridine monophosphate (UMP) to a protein, resulting in modifications known as AMPylation and UMPylation. The sequence is that of Protein nucleotidyltransferase YdiU from Pseudomonas aeruginosa (strain LESB58).